Here is a 158-residue protein sequence, read N- to C-terminus: Cysteine-rich venom protein VAR7 (158 aa).

Residues 1 to 22 (MILLKLYLTLAAILCQSRGTTS) form the signal peptide. An SCP domain is found at 41–158 (NKHNDLRRTV…MGCAINLCPN (118 aa)). The cysteines at positions 77 and 156 are disulfide-linked.

This sequence belongs to the CRISP family. Contains 8 disulfide bonds. As to expression, expressed by the venom gland.

It is found in the secreted. Blocks ryanodine receptors, and potassium channels. This chain is Cysteine-rich venom protein VAR7, found in Varanus acanthurus (Ridge-tailed monitor).